Here is a 100-residue protein sequence, read N- to C-terminus: Urease subunit gamma (100 aa).

It belongs to the urease gamma subunit family. Heterotrimer of UreA (gamma), UreB (beta) and UreC (alpha) subunits. Three heterotrimers associate to form the active enzyme.

The protein resides in the cytoplasm. It catalyses the reaction urea + 2 H2O + H(+) = hydrogencarbonate + 2 NH4(+). It participates in nitrogen metabolism; urea degradation; CO(2) and NH(3) from urea (urease route): step 1/1. This chain is Urease subunit gamma, found in Shewanella halifaxensis (strain HAW-EB4).